An 88-amino-acid polypeptide reads, in one-letter code: Large ribosomal subunit protein bL31B (88 aa).

It belongs to the bacterial ribosomal protein bL31 family. Type B subfamily. In terms of assembly, part of the 50S ribosomal subunit.

This chain is Large ribosomal subunit protein bL31B, found in Herminiimonas arsenicoxydans.